Here is a 366-residue protein sequence, read N- to C-terminus: Protein-glutamate methylesterase/protein-glutamine glutaminase 2 (366 aa).

Positions 3-119 (RLLIADDSAL…SLELDRLRPL (117 aa)) constitute a Response regulatory domain. Position 53 is a 4-aspartylphosphate (Asp-53). The disordered stretch occupies residues 149–168 (AASSPRAKAARRGAARQRAK). The span at 156-166 (KAARRGAARQR) shows a compositional bias: basic residues. The CheB-type methylesterase domain occupies 171–363 (PAPGLVLIGT…AAVIEWGNAD (193 aa)). Residues Ser-181, His-208, and Asp-305 contribute to the active site.

It belongs to the CheB family. In terms of processing, phosphorylated by CheA. Phosphorylation of the N-terminal regulatory domain activates the methylesterase activity.

The protein localises to the cytoplasm. It catalyses the reaction [protein]-L-glutamate 5-O-methyl ester + H2O = L-glutamyl-[protein] + methanol + H(+). It carries out the reaction L-glutaminyl-[protein] + H2O = L-glutamyl-[protein] + NH4(+). Involved in chemotaxis. Part of a chemotaxis signal transduction system that modulates chemotaxis in response to various stimuli. Catalyzes the demethylation of specific methylglutamate residues introduced into the chemoreceptors (methyl-accepting chemotaxis proteins or MCP) by CheR. Also mediates the irreversible deamidation of specific glutamine residues to glutamic acid. The sequence is that of Protein-glutamate methylesterase/protein-glutamine glutaminase 2 from Rhodopseudomonas palustris (strain BisB18).